We begin with the raw amino-acid sequence, 427 residues long: Succinate--CoA ligase [ADP-forming] subunit beta, mitochondrial (427 aa).

A mitochondrion-targeting transit peptide spans 1 to 30; the sequence is MYSRKSLSLISKCGQLSRLNAQAALQARRH. Residues 39 to 284 form the ATP-grasp domain; it reads AQLLREYGIG…LSQEDPDEVK (246 aa). ATP contacts are provided by residues lysine 76 and 83-85; that span reads GRG. Serine 102 is subject to Phosphoserine. Position 144 (glutamate 144) interacts with ATP. Mg(2+) is bound by residues asparagine 236 and aspartate 253. A phosphoserine mark is found at serine 263 and serine 276. Residues asparagine 304 and 361-363 contribute to the substrate site; that span reads GIV.

This sequence belongs to the succinate/malate CoA ligase beta subunit family. Heterodimer of an alpha and a beta subunit. It depends on Mg(2+) as a cofactor.

It is found in the mitochondrion. The enzyme catalyses succinate + ATP + CoA = succinyl-CoA + ADP + phosphate. It functions in the pathway carbohydrate metabolism; tricarboxylic acid cycle; succinate from succinyl-CoA (ligase route): step 1/1. In terms of biological role, succinyl-CoA synthetase functions in the citric acid cycle (TCA), coupling the hydrolysis of succinyl-CoA to the synthesis of ATP and thus represents the only step of substrate-level phosphorylation in the TCA. The beta subunit provides nucleotide specificity of the enzyme and binds the substrate succinate, while the binding sites for coenzyme A and phosphate are found in the alpha subunit. The polypeptide is Succinate--CoA ligase [ADP-forming] subunit beta, mitochondrial (Saccharomyces cerevisiae (strain ATCC 204508 / S288c) (Baker's yeast)).